A 119-amino-acid chain; its full sequence is Fluoride-specific ion channel FluC 1 (119 aa).

The next 4 helical transmembrane spans lie at 2–22 (TGAV…GAVL), 37–57 (AGTL…TFAA), 62–82 (TMLL…SFSV), and 99–119 (HALG…LLVA). Residues G72 and T75 each contribute to the Na(+) site.

Belongs to the fluoride channel Fluc/FEX (TC 1.A.43) family.

It is found in the cell membrane. It carries out the reaction fluoride(in) = fluoride(out). Na(+) is not transported, but it plays an essential structural role and its presence is essential for fluoride channel function. In terms of biological role, fluoride-specific ion channel. Important for reducing fluoride concentration in the cell, thus reducing its toxicity. This is Fluoride-specific ion channel FluC 1 from Halobacterium salinarum (strain ATCC 700922 / JCM 11081 / NRC-1) (Halobacterium halobium).